Reading from the N-terminus, the 210-residue chain is Na(+)-translocating NADH-quinone reductase subunit D (210 aa).

5 consecutive transmembrane segments (helical) span residues 42–62, 72–92, 103–123, 131–151, and 178–198; these read FVMT…ISLI, IIAQ…VLKA, VFVG…AYAM, FLDG…VATV, and NGLL…IWGV.

The protein belongs to the NqrDE/RnfAE family. In terms of assembly, composed of six subunits; NqrA, NqrB, NqrC, NqrD, NqrE and NqrF.

Its subcellular location is the cell inner membrane. It carries out the reaction a ubiquinone + n Na(+)(in) + NADH + H(+) = a ubiquinol + n Na(+)(out) + NAD(+). In terms of biological role, NQR complex catalyzes the reduction of ubiquinone-1 to ubiquinol by two successive reactions, coupled with the transport of Na(+) ions from the cytoplasm to the periplasm. NqrA to NqrE are probably involved in the second step, the conversion of ubisemiquinone to ubiquinol. This Aeromonas hydrophila subsp. hydrophila (strain ATCC 7966 / DSM 30187 / BCRC 13018 / CCUG 14551 / JCM 1027 / KCTC 2358 / NCIMB 9240 / NCTC 8049) protein is Na(+)-translocating NADH-quinone reductase subunit D.